A 507-amino-acid polypeptide reads, in one-letter code: Putative pentatricopeptide repeat-containing protein At3g16710, mitochondrial (507 aa).

A mitochondrion-targeting transit peptide spans 1-48 (MRRSIATGFASIVKGFHLHSHRHRLQISNPRTAASLSLCGFCFWIRAF). PPR repeat units follow at residues 47–81 (AFSSYRKILRNGLHNLQFNDALDLFTRMVHSRPLP), 82–116 (SIIDFTRLLSVIAKMNRYDVVISLFEQMQILGIPP), 117–151 (LLCTCNIVMHCVCLSSQPCRASCFLGKMMKLGFEP), 152–186 (DLVTFTSLLNGYCHWNRIEDAIALFDQILGMGFKP), 187–221 (NVVTYTTLIRCLCKNRHLNHAVELFNQMGTNGSRP), 222–256 (NVVTYNALVTGLCEIGRWGDAAWLLRDMMKRRIEP), 257–291 (NVITFTALIDAFVKVGKLMEAKELYNVMIQMSVYP), 292–326 (DVFTYGSLINGLCMYGLLDEARQMFYLMERNGCYP), 327–361 (NEVIYTTLIHGFCKSKRVEDGMKIFYEMSQKGVVA), 362–396 (NTITYTVLIQGYCLVGRPDVAQEVFNQMSSRRAPP), 397–431 (DIRTYNVLLDGLCCNGKVEKALMIFEYMRKREMDI), 432–466 (NIVTYTIIIQGMCKLGKVEDAFDLFCSLFSKGMKP), and 467–501 (NVITYTTMISGFCRRGLIHEADSLFKKMKEDGFLP).

The protein belongs to the PPR family. P subfamily.

It is found in the mitochondrion. This chain is Putative pentatricopeptide repeat-containing protein At3g16710, mitochondrial, found in Arabidopsis thaliana (Mouse-ear cress).